Consider the following 66-residue polypeptide: Period circadian protein (66 aa).

Residues 1–66 (EGSGGSGSSG…VTLTESLLNK (66 aa)) are disordered. A compositionally biased stretch (low complexity) spans 9-31 (SGNFTTGSNIHMSSVTNTSNAGT). 4 tandem repeats follow at residues 30–31 (GT), 32–33 (GT), 35–36 (GT), and 37–38 (GN). Positions 30-53 (GTGTSGTGNSGGGSGGGTGPGSGA) are 4 X 2 AA tandem repeats of G-[TN]. Residues 32–51 (GTSGTGNSGGGSGGGTGPGS) are compositionally biased toward gly residues.

As to quaternary structure, forms a heterodimer with timeless (TIM); the complex then translocates into the nucleus. Phosphorylated with a circadian rhythmicity, probably by the double-time protein (dbt). Phosphorylation could be implicated in the stability of per monomer and in the formation of heterodimer per-tim.

The protein resides in the nucleus. It is found in the cytoplasm. Its subcellular location is the perinuclear region. Essential for biological clock functions. Determines the period length of circadian and ultradian rhythms; an increase in PER dosage leads to shortened circadian rhythms and a decrease leads to lengthened circadian rhythms. Essential for the circadian rhythmicity of locomotor activity, eclosion behavior, and for the rhythmic component of the male courtship song that originates in the thoracic nervous system. The biological cycle depends on the rhythmic formation and nuclear localization of the TIM-PER complex. Light induces the degradation of TIM, which promotes elimination of PER. Nuclear activity of the heterodimer coordinatively regulates PER and TIM transcription through a negative feedback loop. Behaves as a negative element in circadian transcriptional loop. Does not appear to bind DNA, suggesting indirect transcriptional inhibition. This chain is Period circadian protein (per), found in Drosophila saltans (Fruit fly).